A 251-amino-acid chain; its full sequence is Ubiquinone/menaquinone biosynthesis C-methyltransferase UbiE (251 aa).

Positions 74, 92, and 132 each coordinate S-adenosyl-L-methionine.

This sequence belongs to the class I-like SAM-binding methyltransferase superfamily. MenG/UbiE family.

It catalyses the reaction a 2-demethylmenaquinol + S-adenosyl-L-methionine = a menaquinol + S-adenosyl-L-homocysteine + H(+). The catalysed reaction is a 2-methoxy-6-(all-trans-polyprenyl)benzene-1,4-diol + S-adenosyl-L-methionine = a 5-methoxy-2-methyl-3-(all-trans-polyprenyl)benzene-1,4-diol + S-adenosyl-L-homocysteine + H(+). Its pathway is quinol/quinone metabolism; menaquinone biosynthesis; menaquinol from 1,4-dihydroxy-2-naphthoate: step 2/2. It participates in cofactor biosynthesis; ubiquinone biosynthesis. Functionally, methyltransferase required for the conversion of demethylmenaquinol (DMKH2) to menaquinol (MKH2) and the conversion of 2-polyprenyl-6-methoxy-1,4-benzoquinol (DDMQH2) to 2-polyprenyl-3-methyl-6-methoxy-1,4-benzoquinol (DMQH2). This is Ubiquinone/menaquinone biosynthesis C-methyltransferase UbiE from Rubrivivax gelatinosus (strain NBRC 100245 / IL144).